The sequence spans 844 residues: RING finger containing E3 ubiquitin-protein ligase WSV222 (844 aa).

Position 229-236 (229-236 (AEDDKGKT)) interacts with ATP. The segment at 308-359 (CGVCATSVEEDENEGKTTSLSWYQMNCKHYIHCECLMGMCAAAGNVQCPMCR) adopts an RING-type; atypical zinc-finger fold.

As to quaternary structure, interacts with host UBE2E1/UBCH6; this interaction results in WSV222 auto-ubiquitination. Interacts with host tumor suppressor-like protein.

It carries out the reaction S-ubiquitinyl-[E2 ubiquitin-conjugating enzyme]-L-cysteine + [acceptor protein]-L-lysine = [E2 ubiquitin-conjugating enzyme]-L-cysteine + N(6)-ubiquitinyl-[acceptor protein]-L-lysine.. It participates in protein modification; protein ubiquitination. In terms of biological role, probable E3 ubiquitin-protein ligase which accepts ubiquitin from the E2 ubiquitin-conjugating enzyme UBE2E1/UBCH6 in the form of a thioester and then directly transfers the ubiquitin to targeted substrates. Mediates ubiquitination of host tumor-suppressor-like protein (TSL) targeting it for degradation. Might function as an anti-apoptosis protein by counteracting TSL-induced apoptosis. The protein is RING finger containing E3 ubiquitin-protein ligase WSV222 of White spot syndrome virus (isolate Shrimp/China/Tongan/1996) (WSSV).